The primary structure comprises 412 residues: Probable beta-1,4-xylosyltransferase IRX10 (412 aa).

The helical; Signal-anchor for type II membrane protein transmembrane segment at 1 to 21 (MKIHSCLSAILLFLFFSASSA) threads the bilayer. Over 22–412 (KQNVRTERIS…AGPVADLKPW (391 aa)) the chain is Lumenal. Asn-139 and Asn-400 each carry an N-linked (GlcNAc...) asparagine glycan.

The protein belongs to the glycosyltransferase 47 family. Limited to xylem cells. Expressed in the root tip, xylem cells of roots, and in the vasculature of roots, cotyledons and leaves.

It localises to the golgi apparatus membrane. Its function is as follows. Involved in the synthesis of the hemicellulose glucuronoxylan, a major component of secondary cell walls. Probably involved in the elongation of glucuronoxylan xylosyl backbone, especially in the formation of GlcUA side chain of xylans. The chain is Probable beta-1,4-xylosyltransferase IRX10 (IRX10) from Arabidopsis thaliana (Mouse-ear cress).